We begin with the raw amino-acid sequence, 563 residues long: Arginine--tRNA ligase (563 aa).

The short motif at 120 to 130 is the 'HIGH' region element; it reads PNIAKPFHVGH.

It belongs to the class-I aminoacyl-tRNA synthetase family. In terms of assembly, monomer.

Its subcellular location is the cytoplasm. The enzyme catalyses tRNA(Arg) + L-arginine + ATP = L-arginyl-tRNA(Arg) + AMP + diphosphate. The chain is Arginine--tRNA ligase from Clostridium botulinum (strain Alaska E43 / Type E3).